Here is a 283-residue protein sequence, read N- to C-terminus: Pantothenate synthetase (283 aa).

Residue 30 to 37 participates in ATP binding; that stretch reads MGNLHAGH. The Proton donor role is filled by histidine 37. Glutamine 61 is a (R)-pantoate binding site. Glutamine 61 is a binding site for beta-alanine. 149 to 152 contacts ATP; it reads GEKD. Glutamine 155 lines the (R)-pantoate pocket. ATP is bound by residues leucine 178 and 186-189; that span reads MSSR.

This sequence belongs to the pantothenate synthetase family. In terms of assembly, homodimer.

The protein localises to the cytoplasm. It catalyses the reaction (R)-pantoate + beta-alanine + ATP = (R)-pantothenate + AMP + diphosphate + H(+). It participates in cofactor biosynthesis; (R)-pantothenate biosynthesis; (R)-pantothenate from (R)-pantoate and beta-alanine: step 1/1. Catalyzes the condensation of pantoate with beta-alanine in an ATP-dependent reaction via a pantoyl-adenylate intermediate. The polypeptide is Pantothenate synthetase (Hahella chejuensis (strain KCTC 2396)).